The primary structure comprises 70 residues: Putative membrane protein insertion efficiency factor (70 aa).

This sequence belongs to the UPF0161 family.

It localises to the cell inner membrane. In terms of biological role, could be involved in insertion of integral membrane proteins into the membrane. This Sphingopyxis alaskensis (strain DSM 13593 / LMG 18877 / RB2256) (Sphingomonas alaskensis) protein is Putative membrane protein insertion efficiency factor.